The primary structure comprises 80 residues: uncharacterized protein (80 aa).

The signal sequence occupies residues 1–23 (MKWNNMLKAAGIAVLLFSVFAYA).

This is an uncharacterized protein from Bacillus subtilis (strain 168).